The chain runs to 229 residues: Endonuclease V (229 aa).

The Mg(2+) site is built by D36 and D104.

It belongs to the endonuclease V family. Mg(2+) is required as a cofactor.

Its subcellular location is the cytoplasm. It catalyses the reaction Endonucleolytic cleavage at apurinic or apyrimidinic sites to products with a 5'-phosphate.. In terms of biological role, DNA repair enzyme involved in the repair of deaminated bases. Selectively cleaves double-stranded DNA at the second phosphodiester bond 3' to a deoxyinosine leaving behind the intact lesion on the nicked DNA. This is Endonuclease V from Pectobacterium carotovorum subsp. carotovorum (strain PC1).